Here is a 392-residue protein sequence, read N- to C-terminus: Chorismate synthase (392 aa).

Arginine 40 and arginine 46 together coordinate NADP(+). FMN-binding positions include 129–131, 257–258, glycine 302, 317–321, and arginine 343; these read RSS, QA, and KPIAT.

It belongs to the chorismate synthase family. Homotetramer. FMNH2 is required as a cofactor.

It catalyses the reaction 5-O-(1-carboxyvinyl)-3-phosphoshikimate = chorismate + phosphate. The protein operates within metabolic intermediate biosynthesis; chorismate biosynthesis; chorismate from D-erythrose 4-phosphate and phosphoenolpyruvate: step 7/7. In terms of biological role, catalyzes the anti-1,4-elimination of the C-3 phosphate and the C-6 proR hydrogen from 5-enolpyruvylshikimate-3-phosphate (EPSP) to yield chorismate, which is the branch point compound that serves as the starting substrate for the three terminal pathways of aromatic amino acid biosynthesis. This reaction introduces a second double bond into the aromatic ring system. The sequence is that of Chorismate synthase from Chloroherpeton thalassium (strain ATCC 35110 / GB-78).